Here is a 158-residue protein sequence, read N- to C-terminus: Putative zinc-binding protein ORF9 (158 aa).

An RING-type; degenerate zinc finger spans residues cysteine 72–glycine 111. Positions glycine 126–proline 158 are disordered. Over residues threonine 135 to serine 150 the composition is skewed to basic and acidic residues.

The protein is Putative zinc-binding protein ORF9 (ORF9) of Ictalurid herpesvirus 1 (strain Auburn) (IcHV-1).